A 650-amino-acid chain; its full sequence is Glycoprotein antigen BM86 (650 aa).

An N-terminal signal peptide occupies residues 1-19 (MRGIALFVAAVSLIVEGTA). 2 consecutive EGF-like domains span residues 20-66 (ESSI…KQCE) and 67-104 (YKDT…LQCK). 6 cysteine pairs are disulfide-bonded: Cys-24/Cys-37, Cys-32/Cys-49, Cys-51/Cys-65, Cys-71/Cys-81, Cys-76/Cys-91, and Cys-93/Cys-103. Residues Asn-141 and Asn-182 are each glycosylated (N-linked (GlcNAc...) asparagine). EGF-like domains follow at residues 205–247 (CINA…ITCK), 251–292 (HTVS…DTCI), and 291–335 (CISD…NECL). 9 disulfides stabilise this stretch: Cys-209–Cys-222, Cys-218–Cys-231, Cys-233–Cys-246, Cys-255–Cys-269, Cys-263–Cys-278, Cys-280–Cys-291, Cys-295–Cys-307, Cys-300–Cys-316, and Cys-318–Cys-334. Residues Asn-348 and Asn-382 are each glycosylated (N-linked (GlcNAc...) asparagine). 2 consecutive EGF-like domains span residues 482 to 530 (RRSV…IGCI) and 531 to 568 (ERTT…HECY). 6 disulfides stabilise this stretch: Cys-486–Cys-500, Cys-492–Cys-516, Cys-518–Cys-529, Cys-535–Cys-550, Cys-543–Cys-559, and Cys-561–Cys-567. Residues 603–628 (KSEATTAATTTTKAKDKDPDPGKSSA) form a disordered region. Ser-627 carries the GPI-anchor amidated serine lipid modification. Residues 628-650 (AAAVSATGLLLLLAATSVTAASL) constitute a propeptide, removed in mature form.

It is found in the cell membrane. This chain is Glycoprotein antigen BM86, found in Rhipicephalus microplus (Cattle tick).